The primary structure comprises 215 residues: Ribose-5-phosphate isomerase A (215 aa).

Substrate is bound by residues 26-29 (TGST), 79-82 (DGAD), and 92-95 (KGGG). The Proton acceptor role is filled by E101. K119 contacts substrate.

This sequence belongs to the ribose 5-phosphate isomerase family. In terms of assembly, homodimer.

The catalysed reaction is aldehydo-D-ribose 5-phosphate = D-ribulose 5-phosphate. The protein operates within carbohydrate degradation; pentose phosphate pathway; D-ribose 5-phosphate from D-ribulose 5-phosphate (non-oxidative stage): step 1/1. Catalyzes the reversible conversion of ribose-5-phosphate to ribulose 5-phosphate. This is Ribose-5-phosphate isomerase A from Xylella fastidiosa (strain 9a5c).